Reading from the N-terminus, the 60-residue chain is UPF0434 protein Pnap_1922 (60 aa).

This sequence belongs to the UPF0434 family.

The polypeptide is UPF0434 protein Pnap_1922 (Polaromonas naphthalenivorans (strain CJ2)).